A 298-amino-acid chain; its full sequence is DNA-binding transcriptional activator HetR (298 aa).

Serine 152 is an active-site residue.

The protein belongs to the peptidase S48 family. Homodimer; disulfide-linked.

Its function is as follows. Controls heterocyst differentiation. Dimerization is required for DNA-binding. Has both a protease and a DNA-binding activity. This is DNA-binding transcriptional activator HetR from Nostoc sp. (strain PCC 9229).